An 87-amino-acid chain; its full sequence is Small ribosomal subunit protein uS17 (87 aa).

It belongs to the universal ribosomal protein uS17 family. In terms of assembly, part of the 30S ribosomal subunit.

One of the primary rRNA binding proteins, it binds specifically to the 5'-end of 16S ribosomal RNA. The protein is Small ribosomal subunit protein uS17 of Thioalkalivibrio sulfidiphilus (strain HL-EbGR7).